Consider the following 160-residue polypeptide: Ribosome maturation factor RimP (160 aa).

Belongs to the RimP family.

It localises to the cytoplasm. Functionally, required for maturation of 30S ribosomal subunits. This Orientia tsutsugamushi (strain Ikeda) (Rickettsia tsutsugamushi) protein is Ribosome maturation factor RimP.